The primary structure comprises 143 residues: Transcription antitermination protein NusB (143 aa).

The protein belongs to the NusB family.

Involved in transcription antitermination. Required for transcription of ribosomal RNA (rRNA) genes. Binds specifically to the boxA antiterminator sequence of the ribosomal RNA (rrn) operons. The sequence is that of Transcription antitermination protein NusB from Clostridium botulinum (strain ATCC 19397 / Type A).